The sequence spans 423 residues: Adenylosuccinate synthetase (423 aa).

GTP is bound by residues 13–19 and 41–43; these read GDEGKGK and GHT. Residue D14 is the Proton acceptor of the active site. The Mg(2+) site is built by D14 and G41. IMP is bound by residues 14-17, 39-42, T130, R144, Q223, T238, and R302; these read DEGK and NAGH. H42 (proton donor) is an active-site residue. 298 to 304 serves as a coordination point for substrate; it reads SVTGRKR. GTP contacts are provided by residues R304 and 410–412; that span reads SVG.

Belongs to the adenylosuccinate synthetase family. In terms of assembly, homodimer. Requires Mg(2+) as cofactor.

It localises to the cytoplasm. The catalysed reaction is IMP + L-aspartate + GTP = N(6)-(1,2-dicarboxyethyl)-AMP + GDP + phosphate + 2 H(+). It participates in purine metabolism; AMP biosynthesis via de novo pathway; AMP from IMP: step 1/2. In terms of biological role, plays an important role in the de novo pathway of purine nucleotide biosynthesis. Catalyzes the first committed step in the biosynthesis of AMP from IMP. The protein is Adenylosuccinate synthetase of Porphyromonas gingivalis (strain ATCC BAA-308 / W83).